Reading from the N-terminus, the 178-residue chain is MSGGKYVDSEGHLYTVPIREQGNIYKPNNKAMADELSEKQVYDAHTKEIDLVNRDPKHLNDDVVKIDFEDVIAEPEGTHSFDGIWKASFTTFTVTKYWFYRLLSALFGIPMALIWGIYFAILSFLHIWAVVPCIKSFLIEIQCISRVYSIYVHTVCDPLFEAVGKIFSNVRINLQKEI.

S2 is subject to N-acetylserine. Residue S2 is modified to Phosphoserine. The tract at residues 2–94 (SGGKYVDSEG…WKASFTTFTV (93 aa)) is required for homooligomerization. The Cytoplasmic segment spans residues 2 to 104 (SGGKYVDSEG…TKYWFYRLLS (103 aa)). K5 bears the N6-acetyllysine; alternate mark. Residue K5 forms a Glycyl lysine isopeptide (Lys-Gly) (interchain with G-Cter in ubiquitin); alternate linkage. At Y6 the chain carries Phosphotyrosine. A Phosphoserine modification is found at S9. Y14 is modified (phosphotyrosine; by ABL1). Y25 is modified (phosphotyrosine). Residues K26 and K30 each participate in a glycyl lysine isopeptide (Lys-Gly) (interchain with G-Cter in ubiquitin) cross-link. S37 is modified (phosphoserine). Glycyl lysine isopeptide (Lys-Gly) (interchain with G-Cter in ubiquitin) cross-links involve residues K39, K47, and K57. Residues 82 to 94 (DGIWKASFTTFTV) form an interaction with CAVIN3 region. An intramembrane region (helical) is located at residues 105–125 (ALFGIPMALIWGIYFAILSFL). Residues 126–178 (HIWAVVPCIKSFLIEIQCISRVYSIYVHTVCDPLFEAVGKIFSNVRINLQKEI) lie on the Cytoplasmic side of the membrane. Residues 131 to 142 (VPCIKSFLIEIQ) are interacts with SPRY1, SPRY2, SPRY3 and SPRY4. S-palmitoyl cysteine attachment occurs at residues C133, C143, and C156. The interacts with SPRY1, SPRY2, and SPRY4 stretch occupies residues 149 to 160 (SIYVHTVCDPLF). The tract at residues 167–178 (FSNVRINLQKEI) is interacts with SPRY1, SPRY2, SPRY3 and SPRY4.

It belongs to the caveolin family. As to quaternary structure, homooligomer. Interacts (via the N-terminus) with DPP4; the interaction is direct. Forms a stable heterooligomeric complex with CAV2 that targets to lipid rafts and drives caveolae formation. Interacts with PACSIN2; this interaction induces membrane tubulation. Interacts with BMX, BTK, CTNNB1, CDH1, GLIPR2, JUP, NOSTRIN, SNAP25 and STX1A. Interacts with SLC7A9. Interacts with TGFBR1. Interacts with CAVIN3 (via leucine-zipper domain) in a cholesterol-sensitive manner. Interacts with CAVIN1. Interacts with EHD2 in a cholesterol-dependent manner. Forms a ternary complex with UBXN6 and VCP; mediates CAV1 targeting to lysosomes for degradation. Interacts with ABCG1; this interaction regulates ABCG1-mediated cholesterol efflux. Interacts with NEU3; this interaction enhances NEU3 sialidase activity within caveola. Interacts (via C-terminus) with SPRY1, SPRY2 (via C-terminus), SPRY3, and SPRY4. Interacts with IGFBP5; this interaction allows trafficking of IGFBP5 from the plasma membrane to the nucleus. Post-translationally, phosphorylated at Tyr-14 by ABL1 in response to oxidative stress. Ubiquitinated. Undergo monoubiquitination and multi- and/or polyubiquitination. Monoubiquitination of N-terminal lysines promotes integration in a ternary complex with UBXN6 and VCP which promotes oligomeric CAV1 targeting to lysosomes for degradation. Ubiquitinated by ZNRF1; leading to degradation and modulation of the TLR4-mediated immune response.

The protein resides in the golgi apparatus membrane. It localises to the cell membrane. Its subcellular location is the membrane. It is found in the caveola. The protein localises to the membrane raft. May act as a scaffolding protein within caveolar membranes. Forms a stable heterooligomeric complex with CAV2 that targets to lipid rafts and drives caveolae formation. Mediates the recruitment of CAVIN proteins (CAVIN1/2/3/4) to the caveolae. Interacts directly with G-protein alpha subunits and can functionally regulate their activity. Involved in the costimulatory signal essential for T-cell receptor (TCR)-mediated T-cell activation. Its binding to DPP4 induces T-cell proliferation and NF-kappa-B activation in a T-cell receptor/CD3-dependent manner. Recruits CTNNB1 to caveolar membranes and may regulate CTNNB1-mediated signaling through the Wnt pathway. Negatively regulates TGFB1-mediated activation of SMAD2/3 by mediating the internalization of TGFBR1 from membrane rafts leading to its subsequent degradation. Binds 20(S)-hydroxycholesterol (20(S)-OHC). This chain is Caveolin-1 (CAV1), found in Chlorocebus aethiops (Green monkey).